The following is an 88-amino-acid chain: Cell division topological specificity factor (88 aa).

Belongs to the MinE family.

Prevents the cell division inhibition by proteins MinC and MinD at internal division sites while permitting inhibition at polar sites. This ensures cell division at the proper site by restricting the formation of a division septum at the midpoint of the long axis of the cell. This Carboxydothermus hydrogenoformans (strain ATCC BAA-161 / DSM 6008 / Z-2901) protein is Cell division topological specificity factor.